Consider the following 160-residue polypeptide: MAKLKKHPTGTIAQNKKARHDYFIEHKFEAGLVLSGWEVKSLRATKVQLVDSYVLLKDGEAWLMGCHITPLKTASTHVIADPTRTRKLLLNKRELEKLTSSVQQKGYACVALSVYWKEHLVKCEIALGKGKKEYDKRHTERERDSDRELQRAVRSKGKDD.

Residues 131–160 form a disordered region; it reads KKEYDKRHTERERDSDRELQRAVRSKGKDD.

This sequence belongs to the SmpB family.

The protein resides in the cytoplasm. Functionally, required for rescue of stalled ribosomes mediated by trans-translation. Binds to transfer-messenger RNA (tmRNA), required for stable association of tmRNA with ribosomes. tmRNA and SmpB together mimic tRNA shape, replacing the anticodon stem-loop with SmpB. tmRNA is encoded by the ssrA gene; the 2 termini fold to resemble tRNA(Ala) and it encodes a 'tag peptide', a short internal open reading frame. During trans-translation Ala-aminoacylated tmRNA acts like a tRNA, entering the A-site of stalled ribosomes, displacing the stalled mRNA. The ribosome then switches to translate the ORF on the tmRNA; the nascent peptide is terminated with the 'tag peptide' encoded by the tmRNA and targeted for degradation. The ribosome is freed to recommence translation, which seems to be the essential function of trans-translation. The sequence is that of SsrA-binding protein from Pseudomonas syringae pv. syringae (strain B728a).